Reading from the N-terminus, the 259-residue chain is tRNA (guanine-N(7)-)-methyltransferase (259 aa).

The segment at 1 to 36 is disordered; it reads MTFPSHNPPETGHPSAAPDEALPAAEAPVPGDPEAR. Over residues 14–29 the composition is skewed to low complexity; it reads PSAAPDEALPAAEAPV. Glutamate 91, glutamate 116, aspartate 143, and aspartate 166 together coordinate S-adenosyl-L-methionine. The active site involves aspartate 166. Substrate is bound by residues lysine 170, aspartate 202, and 237–240; that span reads TKFE.

The protein belongs to the class I-like SAM-binding methyltransferase superfamily. TrmB family.

The catalysed reaction is guanosine(46) in tRNA + S-adenosyl-L-methionine = N(7)-methylguanosine(46) in tRNA + S-adenosyl-L-homocysteine. The protein operates within tRNA modification; N(7)-methylguanine-tRNA biosynthesis. Its function is as follows. Catalyzes the formation of N(7)-methylguanine at position 46 (m7G46) in tRNA. The polypeptide is tRNA (guanine-N(7)-)-methyltransferase (Aromatoleum aromaticum (strain DSM 19018 / LMG 30748 / EbN1) (Azoarcus sp. (strain EbN1))).